The following is an 858-amino-acid chain: MQEQYVPQSIEPAVQKHWDAKKTFKAVEKVDKEKFYCLSMFPYPSGRLHMGHVRNYTIGDVISRYQRLNGKNVLQPIGWDAFGLPAENAAVKNNTAPAPWTYENIEYMKNQLKMLGLGYDWDRELATCKPDYYRWEQWFFTKLYEKGLVYKKTSSVNWCPNDMTVLANEQVVDNCCWRCDTPVEQKEIPQWFIKITDYAEELLNDIDNLEGWPEMVKTMQRNWIGRSEGVNISFAIEGQAEQLEVYTTRPDTFMGVTYVGIAAGHPLALQAAATNPGLAAFIEECKNTKVAEAELATMEKKGMATGLYAIHPLDGRKVPVWVANFVLMNYGTGAVMAVPGHDQRDHEFATKYGLDIKAVIKPADGEVDVSDAAYTEKGVLFASGEFDGLDFQGAFDAIANKLEALGHGKRTVNFRLRDWGVSRQRYWGAPIPMLTLADGTVVPTPEDQLPVLLPEDVVMDGIQSPIKADAEWAKTTYNGQEAFRETDTFDTFMESSWYYARYCSPDYDKGMLDPAAANHWLPVDQYIGGIEHACMHLLYARFFHKLLRDAGLVNSDEPFKRLLCQGMVLADAFYYKDEKGGNVWVSPTDVKVERDEKGRITKAIDNDGREVIHSGMTKMSKSKNNGIDPQLMVERYGADTVRLFMMFASPAEMTLEWSDSGVEGAQRFLRRLWRLTFEHVSAGAVPALDVAALTSEQKAVRRELHKTIAKVSDDVGRRQTFNTAIAAIMELMNNLAKLGSDEQDRALMQEALETVVVMLSPITPHIGFELWKMLGKGDDVDHATWPVADEAAMVETEKLVVVQINGKMRGKLTVPAEISQADVEKLAMADASVQKFTDGLTVRKVIYVPGKLLNIVAN.

A 'HIGH' region motif is present at residues 42–52 (PYPSGRLHMGH). The 'KMSKS' region signature appears at 618–622 (KMSKS). An ATP-binding site is contributed by Lys-621.

Belongs to the class-I aminoacyl-tRNA synthetase family.

It is found in the cytoplasm. It carries out the reaction tRNA(Leu) + L-leucine + ATP = L-leucyl-tRNA(Leu) + AMP + diphosphate. The protein is Leucine--tRNA ligase of Aeromonas salmonicida (strain A449).